A 251-amino-acid polypeptide reads, in one-letter code: uncharacterized protein (251 aa).

To Anabaena PCC 7120 alr2406.

This is an uncharacterized protein from Synechocystis sp. (strain ATCC 27184 / PCC 6803 / Kazusa).